A 431-amino-acid chain; its full sequence is Serine hydroxymethyltransferase 2 (431 aa).

(6S)-5,6,7,8-tetrahydrofolate contacts are provided by residues Leu-131 and 135 to 137; that span reads GHL. Residue Lys-240 is modified to N6-(pyridoxal phosphate)lysine.

It belongs to the SHMT family. As to quaternary structure, homodimer. Requires pyridoxal 5'-phosphate as cofactor.

It is found in the cytoplasm. It carries out the reaction (6R)-5,10-methylene-5,6,7,8-tetrahydrofolate + glycine + H2O = (6S)-5,6,7,8-tetrahydrofolate + L-serine. The protein operates within one-carbon metabolism; tetrahydrofolate interconversion. Its pathway is amino-acid biosynthesis; glycine biosynthesis; glycine from L-serine: step 1/1. In terms of biological role, catalyzes the reversible interconversion of serine and glycine with tetrahydrofolate (THF) serving as the one-carbon carrier. This reaction serves as the major source of one-carbon groups required for the biosynthesis of purines, thymidylate, methionine, and other important biomolecules. Also exhibits THF-independent aldolase activity toward beta-hydroxyamino acids, producing glycine and aldehydes, via a retro-aldol mechanism. This Photobacterium profundum (strain SS9) protein is Serine hydroxymethyltransferase 2.